Here is a 217-residue protein sequence, read N- to C-terminus: Peptide methionine sulfoxide reductase MsrA (217 aa).

Residues Glu16–Ile39 form a disordered region. The active site involves Cys56.

The protein belongs to the MsrA Met sulfoxide reductase family.

The catalysed reaction is L-methionyl-[protein] + [thioredoxin]-disulfide + H2O = L-methionyl-(S)-S-oxide-[protein] + [thioredoxin]-dithiol. It catalyses the reaction [thioredoxin]-disulfide + L-methionine + H2O = L-methionine (S)-S-oxide + [thioredoxin]-dithiol. Functionally, has an important function as a repair enzyme for proteins that have been inactivated by oxidation. Catalyzes the reversible oxidation-reduction of methionine sulfoxide in proteins to methionine. This chain is Peptide methionine sulfoxide reductase MsrA, found in Corynebacterium efficiens (strain DSM 44549 / YS-314 / AJ 12310 / JCM 11189 / NBRC 100395).